The following is a 284-amino-acid chain: 2-dehydro-3-deoxyphosphooctonate aldolase (284 aa).

Belongs to the KdsA family.

The protein localises to the cytoplasm. It catalyses the reaction D-arabinose 5-phosphate + phosphoenolpyruvate + H2O = 3-deoxy-alpha-D-manno-2-octulosonate-8-phosphate + phosphate. The protein operates within carbohydrate biosynthesis; 3-deoxy-D-manno-octulosonate biosynthesis; 3-deoxy-D-manno-octulosonate from D-ribulose 5-phosphate: step 2/3. Its pathway is bacterial outer membrane biogenesis; lipopolysaccharide biosynthesis. The sequence is that of 2-dehydro-3-deoxyphosphooctonate aldolase from Yersinia enterocolitica serotype O:8 / biotype 1B (strain NCTC 13174 / 8081).